A 152-amino-acid chain; its full sequence is Heavy metal-associated isoprenylated plant protein 20 (152 aa).

Positions 27–90 (MQTVNIKVKM…RIERTGKKAE (64 aa)) constitute an HMA domain. Cd(2+)-binding residues include Cys38 and Cys41. Cys149 is modified (cysteine methyl ester). A lipid anchor (S-farnesyl cysteine) is attached at Cys149. A propeptide spans 150-152 (TVM) (removed in mature form).

Belongs to the HIPP family. In terms of assembly, interacts with ZHD11/HB29. Expressed in roots, shoot apical meristem, leaves and flowers.

Its subcellular location is the membrane. In terms of biological role, heavy-metal-binding protein. Binds cadmium. May be involved in cadmium transport and play a role in cadmium detoxification. The protein is Heavy metal-associated isoprenylated plant protein 20 of Arabidopsis thaliana (Mouse-ear cress).